Here is a 541-residue protein sequence, read N- to C-terminus: Paromamine 6'-oxidase (541 aa).

The disordered stretch occupies residues Met1–Trp29. His470 (proton acceptor) is an active-site residue.

Belongs to the GMC oxidoreductase family. Requires FAD as cofactor.

The catalysed reaction is 6'''-deamino-6'''-hydroxyneomycin C + O2 = 6'''-deamino-6'''-oxoneomycin C + H2O2. It carries out the reaction paromamine + O2 = 6'-oxoparomamine + H2O2. It functions in the pathway antibiotic biosynthesis; neomycin biosynthesis. Functionally, glucosaminyl-6'-oxidase involved in the biosynthetic pathway of neomycin by mediating FAD-dependent dehydrogenation of paromamine to 6'-dehydro-6'-oxoparomamine. Works in combination with neamine transaminase to replace the 6-hydroxy group of paromamine with an amino group. Also able to collaborate with neomycin C transaminase to replace the 6'''-hydroxy group of 6'''-hydroxyneomycin C with an amino group. The protein is Paromamine 6'-oxidase (neoG) of Streptomyces fradiae (Streptomyces roseoflavus).